We begin with the raw amino-acid sequence, 343 residues long: Holliday junction branch migration complex subunit RuvB (343 aa).

The segment at 1 to 186 (MVMARKSDTL…FQIQERLEYY (186 aa)) is large ATPase domain (RuvB-L). ATP contacts are provided by residues Leu25, Arg26, Gly67, Lys70, Thr71, Ser72, 133–135 (EDF), Arg176, Tyr186, and Arg223. Thr71 lines the Mg(2+) pocket. The interval 187 to 257 (DAKALESILH…LAQKSLDRLG (71 aa)) is small ATPAse domain (RuvB-S). The tract at residues 260–343 (ASGLDSMDRK…PPPTPQGSLF (84 aa)) is head domain (RuvB-H). The DNA site is built by Arg296, Arg315, and Arg320.

It belongs to the RuvB family. Homohexamer. Forms an RuvA(8)-RuvB(12)-Holliday junction (HJ) complex. HJ DNA is sandwiched between 2 RuvA tetramers; dsDNA enters through RuvA and exits via RuvB. An RuvB hexamer assembles on each DNA strand where it exits the tetramer. Each RuvB hexamer is contacted by two RuvA subunits (via domain III) on 2 adjacent RuvB subunits; this complex drives branch migration. In the full resolvosome a probable DNA-RuvA(4)-RuvB(12)-RuvC(2) complex forms which resolves the HJ.

The protein resides in the cytoplasm. It catalyses the reaction ATP + H2O = ADP + phosphate + H(+). The RuvA-RuvB-RuvC complex processes Holliday junction (HJ) DNA during genetic recombination and DNA repair, while the RuvA-RuvB complex plays an important role in the rescue of blocked DNA replication forks via replication fork reversal (RFR). RuvA specifically binds to HJ cruciform DNA, conferring on it an open structure. The RuvB hexamer acts as an ATP-dependent pump, pulling dsDNA into and through the RuvAB complex. RuvB forms 2 homohexamers on either side of HJ DNA bound by 1 or 2 RuvA tetramers; 4 subunits per hexamer contact DNA at a time. Coordinated motions by a converter formed by DNA-disengaged RuvB subunits stimulates ATP hydrolysis and nucleotide exchange. Immobilization of the converter enables RuvB to convert the ATP-contained energy into a lever motion, pulling 2 nucleotides of DNA out of the RuvA tetramer per ATP hydrolyzed, thus driving DNA branch migration. The RuvB motors rotate together with the DNA substrate, which together with the progressing nucleotide cycle form the mechanistic basis for DNA recombination by continuous HJ branch migration. Branch migration allows RuvC to scan DNA until it finds its consensus sequence, where it cleaves and resolves cruciform DNA. This is Holliday junction branch migration complex subunit RuvB from Myxococcus xanthus (strain DK1622).